Consider the following 287-residue polypeptide: MKNILLCTDGSDFAQQSYPYAAWLASKLGGNIKVLYVTDIRAQKAVESVNLSGSIGLGTSEELLKQLVDLEHTKAKLNHQKAKLVLATAKNTLQQAGIESVQVMHKTGFLLDCLEDLKGDFDVIILGKRGETAKFAQGHLGANMERIIRSIPKPCLVTPKQFQTITKVLFAYDGSASCQKILQFLAGSSLLADLPLHIVTVGKTNQDPQAIANLGTAEKVLEKAGFKLEVELLVGHAEEAIVRYQEDNAIDLLLMGAHGHSRIRHLVIGSTTAQVLRKTSIPVLTFR.

It belongs to the universal stress protein A family.

In Synechocystis sp. (strain ATCC 27184 / PCC 6803 / Kazusa), this protein is Universal stress protein Slr1230.